Here is a 1281-residue protein sequence, read N- to C-terminus: Dynactin subunit 1 (1281 aa).

Residues 1–25 (MAQSKRHVYSRTPSGSRMSAEASAR) are disordered. One can recognise a CAP-Gly domain in the interval 48-90 (GATLFATGKWVGVILDEAKGKNDGTVQGRKYFTCDEGHGIFVR). Residues 99-225 (DGADTTSPET…EEEGLRAQVR (127 aa)) form a disordered region. Positions 102–114 (DTTSPETPDSSAS) are enriched in polar residues. Phosphothreonine is present on residues T108, T145, T146, and T147. Basic residues predominate over residues 129 to 152 (SKLRGPKPKKAPTARKTTTRRPKP). The segment covering 161–205 (AGASSSLGPSGSASAGELSSSEPSTPAQTPLAAPIIPTPALTSPG) has biased composition (low complexity). A phosphoserine mark is found at S179 and S212. A compositionally biased stretch (basic and acidic residues) spans 214-225 (SKEEEGLRAQVR). Coiled coils occupy residues 217–540 (EEGL…QQEA) and 952–1043 (IKEL…QSKR). The interval 911–1281 (EYDAERPPSK…LHQLHDRLIS (371 aa)) is interaction with HPS6. The tract at residues 1065–1084 (GEEQQRGGAPGQAPGIVPGP) is disordered.

Belongs to the dynactin 150 kDa subunit family. In terms of assembly, monomer and homodimer. Subunit of dynactin, a multiprotein complex part of a tripartite complex with dynein and a adapter, such as BICDL1, BICD2 or HOOK3. The dynactin complex is built around ACTR1A/ACTB filament and consists of an actin-related filament composed of a shoulder domain, a pointed end and a barbed end. Its length is defined by its flexible shoulder domain. The soulder is composed of 2 DCTN1 subunits, 4 DCTN2 and 2 DCTN3. DCTN1/p150(glued) binds directly to microtubules and to cytoplasmic dynein. The 4 DCNT2 (via N-terminus) bind the ACTR1A filament and act as molecular rulers to determine the length. The pointed end is important for binding dynein-dynactin cargo adapters. Consists of 4 subunits: ACTR10, DCNT4, DCTN5 and DCTN6. The barbed end is composed of a CAPZA1:CAPZB heterodimers, which binds ACTR1A/ACTB filament and dynactin and stabilizes dynactin. Interacts with the C-terminus of MAPRE1, MAPRE2 and MAPRE3. Interacts (via C-terminus) with SNX6. Interacts with CLN3, DYNAP, ECPAS and FBXL5. Interacts with MISP; this interaction regulates its distribution at the cell cortex. Interacts with CEP131. Interacts with CEP126. Interacts with CLIP1. Interacts with dynein intermediate chain and dynein heavy chain. Interacts with PLK1 (via POLO-box domain). Interacts with TBCB. Binds preferentially to tyrosinated microtubules than to detyrosinated microtubules. Interacts with PARD6A. Interacts with HPS6. Interacts with KIF3A. Interacts with BICD2. Interacts with DST (isoform 9). Interacts with DST (isoform 1). Identified in a complex with MREG and RILP. Interacts with BCCIP (isoform 2/alpha). Interacts with DCDC1. Interacts with AKNA. Interacts with DYNC1I2. Interacts with RUFY3 and RUFY4. Ubiquitinated by a SCF complex containing FBXL5, leading to its degradation by the proteasome. In terms of processing, phosphorylation by SLK at Thr-145, Thr-146 and Thr-147 targets DCTN1 to the centrosome. It is uncertain if SLK phosphorylates all three threonines or one or two of them. PLK1-mediated phosphorylation at Ser-179 is essential for its localization in the nuclear envelope, promotes its dissociation from microtubules during early mitosis and positively regulates nuclear envelope breakdown during prophase.

Its subcellular location is the cytoplasm. It localises to the cytoskeleton. The protein resides in the microtubule organizing center. It is found in the centrosome. The protein localises to the centriole. Its subcellular location is the spindle. It localises to the nucleus envelope. The protein resides in the cell cortex. Functionally, part of the dynactin complex that activates the molecular motor dynein for ultra-processive transport along microtubules. Plays a key role in dynein-mediated retrograde transport of vesicles and organelles along microtubules by recruiting and tethering dynein to microtubules. Binds to both dynein and microtubules providing a link between specific cargos, microtubules and dynein. Essential for targeting dynein to microtubule plus ends, recruiting dynein to membranous cargos and enhancing dynein processivity (the ability to move along a microtubule for a long distance without falling off the track). Can also act as a brake to slow the dynein motor during motility along the microtubule. Can regulate microtubule stability by promoting microtubule formation, nucleation and polymerization and by inhibiting microtubule catastrophe in neurons. Inhibits microtubule catastrophe by binding both to microtubules and to tubulin, leading to enhanced microtubule stability along the axon. Plays a role in metaphase spindle orientation. Plays a role in centriole cohesion and subdistal appendage organization and function. Its recruitment to the centriole in a KIF3A-dependent manner is essential for the maintenance of centriole cohesion and the formation of subdistal appendage. Also required for microtubule anchoring at the mother centriole. Plays a role in primary cilia formation. This is Dynactin subunit 1 (DCTN1) from Sus scrofa (Pig).